The sequence spans 92 residues: PqqA binding protein (92 aa).

This sequence belongs to the PqqD family. As to quaternary structure, monomer. Interacts with PqqE.

It participates in cofactor biosynthesis; pyrroloquinoline quinone biosynthesis. In terms of biological role, functions as a PqqA binding protein and presents PqqA to PqqE, in the pyrroloquinoline quinone (PQQ) biosynthetic pathway. The sequence is that of PqqA binding protein from Xanthomonas oryzae pv. oryzae (strain PXO99A).